A 258-amino-acid polypeptide reads, in one-letter code: Bidirectional sugar transporter SWEET9 (258 aa).

Residues 1-7 (MFLKVHE) are Extracellular-facing. Residues 8–28 (IAFLFGLLGNIVSFGVFLSPV) form a helical membrane-spanning segment. One can recognise a MtN3/slv 1 domain in the interval 10–96 (FLFGLLGNIV…FLYILYAPRE (87 aa)). The Cytoplasmic portion of the chain corresponds to 29 to 42 (PTFYGIYKKKSSKG). A helical membrane pass occupies residues 43–63 (FQSIPYICALASATLLLYYGI). The Extracellular segment spans residues 64-69 (MKTHAY). The helical transmembrane segment at 70–90 (LIISINTFGCFIEISYLFLYI) threads the bilayer. Topologically, residues 91 to 103 (LYAPREAKISTLK) are cytoplasmic. Residues 104 to 124 (LIVICNIGGLGLLILLVNLLV) traverse the membrane as a helical segment. Over 125–131 (PKQHRVS) the chain is Extracellular. Residues 132-152 (TVGWVCAAYSLAVFASPLSVM) traverse the membrane as a helical segment. Residues 132–216 (TVGWVCAAYS…ILYMMYQGST (85 aa)) form the MtN3/slv 2 domain. The Cytoplasmic segment spans residues 153–165 (RKVIKTKSVEYMP). A helical transmembrane segment spans residues 166–186 (FLLSLSLTLNAVMWFFYGLLI). Topologically, residues 187–189 (KDK) are extracellular. The chain crosses the membrane as a helical span at residues 190-210 (FIAMPNILGFLFGVAQMILYM). The Cytoplasmic portion of the chain corresponds to 211–258 (MYQGSTKTDLPTENQLANKTDVNEVPIVAVELPDVGSDNVEGSVRPMK).

It belongs to the SWEET sugar transporter family. In terms of assembly, forms heterooligomers with SWEET1, SWEET5, SWEET8, SWEET11, SWEET13, SWEET16 and SWEET17. In terms of tissue distribution, specifically expressed in nectaries, mostly in the lower half of nectary parenchyma.

Its subcellular location is the cell membrane. It is found in the cytoplasmic vesicle membrane. The protein resides in the golgi apparatus. The protein localises to the trans-Golgi network membrane. In terms of biological role, mediates both low-affinity uptake and efflux of sugar across the plasma membrane. Nectary-specific sugar transporter required for nectar production by mediating the secretion of sucrose from the nectary parenchyma to the extracellular space. The protein is Bidirectional sugar transporter SWEET9 of Arabidopsis thaliana (Mouse-ear cress).